Here is a 331-residue protein sequence, read N- to C-terminus: Glyceraldehyde-3-phosphate dehydrogenase, cytosolic (331 aa).

NAD(+) is bound by residues 11 to 12, Asp33, and Arg77; that span reads RI. Residues 148 to 150, Thr179, 208 to 209, and Arg231 contribute to the D-glyceraldehyde 3-phosphate site; these read SCT and TG. Residue Cys149 is the Nucleophile of the active site. Asn313 serves as a coordination point for NAD(+).

The protein belongs to the glyceraldehyde-3-phosphate dehydrogenase family. Homotetramer.

Its subcellular location is the cytoplasm. It carries out the reaction D-glyceraldehyde 3-phosphate + phosphate + NAD(+) = (2R)-3-phospho-glyceroyl phosphate + NADH + H(+). Its pathway is carbohydrate degradation; glycolysis; pyruvate from D-glyceraldehyde 3-phosphate: step 1/5. This chain is Glyceraldehyde-3-phosphate dehydrogenase, cytosolic (GAPC), found in Leishmania mexicana.